The primary structure comprises 108 residues: Thiosulfate sulfurtransferase GlpE (108 aa).

One can recognise a Rhodanese domain in the interval 17-105 (QEKEAVLVDI…WQRQFPAEVA (89 aa)). Cysteine 65 serves as the catalytic Cysteine persulfide intermediate.

This sequence belongs to the GlpE family.

It is found in the cytoplasm. The catalysed reaction is thiosulfate + hydrogen cyanide = thiocyanate + sulfite + 2 H(+). It catalyses the reaction thiosulfate + [thioredoxin]-dithiol = [thioredoxin]-disulfide + hydrogen sulfide + sulfite + 2 H(+). In terms of biological role, transferase that catalyzes the transfer of sulfur from thiosulfate to thiophilic acceptors such as cyanide or dithiols. May function in a CysM-independent thiosulfate assimilation pathway by catalyzing the conversion of thiosulfate to sulfite, which can then be used for L-cysteine biosynthesis. This Shigella dysenteriae serotype 1 (strain Sd197) protein is Thiosulfate sulfurtransferase GlpE.